A 311-amino-acid chain; its full sequence is Probable manganese-dependent inorganic pyrophosphatase (311 aa).

Residues His9, Asp13, Asp15, Asp77, His99, and Asp151 each contribute to the Mn(2+) site.

This sequence belongs to the PPase class C family. It depends on Mn(2+) as a cofactor.

Its subcellular location is the cytoplasm. The enzyme catalyses diphosphate + H2O = 2 phosphate + H(+). In Streptococcus agalactiae serotype Ia (strain ATCC 27591 / A909 / CDC SS700), this protein is Probable manganese-dependent inorganic pyrophosphatase.